The chain runs to 285 residues: Acetyl-coenzyme A carboxylase carboxyl transferase subunit beta (285 aa).

In terms of domain architecture, CoA carboxyltransferase N-terminal spans 24–285; the sequence is GLWYKSPTGK…DLIQNQPVRA (262 aa).

This sequence belongs to the AccD/PCCB family. Acetyl-CoA carboxylase is a heterohexamer composed of biotin carboxyl carrier protein (AccB), biotin carboxylase (AccC) and two subunits each of ACCase subunit alpha (AccA) and ACCase subunit beta (AccD).

The protein resides in the cytoplasm. The catalysed reaction is N(6)-carboxybiotinyl-L-lysyl-[protein] + acetyl-CoA = N(6)-biotinyl-L-lysyl-[protein] + malonyl-CoA. It participates in lipid metabolism; malonyl-CoA biosynthesis; malonyl-CoA from acetyl-CoA: step 1/1. Its function is as follows. Component of the acetyl coenzyme A carboxylase (ACC) complex. Biotin carboxylase (BC) catalyzes the carboxylation of biotin on its carrier protein (BCCP) and then the CO(2) group is transferred by the transcarboxylase to acetyl-CoA to form malonyl-CoA. The sequence is that of Acetyl-coenzyme A carboxylase carboxyl transferase subunit beta from Christiangramia forsetii (strain DSM 17595 / CGMCC 1.15422 / KT0803) (Gramella forsetii).